Reading from the N-terminus, the 278-residue chain is S-formylglutathione hydrolase YeiG (278 aa).

Active-site charge relay system residues include Ser-145, Asp-223, and His-256.

This sequence belongs to the esterase D family.

The catalysed reaction is S-formylglutathione + H2O = formate + glutathione + H(+). Functionally, serine hydrolase involved in the detoxification of formaldehyde. Hydrolyzes S-formylglutathione to glutathione and formate. This chain is S-formylglutathione hydrolase YeiG (yeiG), found in Escherichia coli O157:H7.